The following is a 171-amino-acid chain: MPRYAIIDSDTASDDTIAILLASKFFKLLGITIVAGNVKFENEIKNALFTVEYFNLDVPVFIGSSRPIMGKWSTVEEVHGNNGIGDWKIEEPKISPEKEHAIDAIIRLSKEYEGELEILAVSPLTNLALAYLKDPTIVKRIKKVWIMGGAFSRGNTTPIAEFNFWVDPEAA.

It belongs to the IUNH family.

This is an uncharacterized protein from Acidianus ambivalens (Desulfurolobus ambivalens).